The sequence spans 338 residues: Holliday junction branch migration complex subunit RuvB (338 aa).

The segment at 1-184 (MTEEERLLSA…FGIISHMEYY (184 aa)) is large ATPase domain (RuvB-L). ATP-binding positions include Leu-23, Arg-24, Gly-65, Lys-68, Thr-69, Thr-70, 131-133 (EDF), Arg-174, Tyr-184, and Arg-221. Residue Thr-69 participates in Mg(2+) binding. A small ATPAse domain (RuvB-S) region spans residues 185 to 255 (QEQDLKEIVL…IADKALTLLQ (71 aa)). The interval 258 to 338 (HQGLDYVDQK…GYDYLEGRKN (81 aa)) is head domain (RuvB-H). The DNA site is built by Arg-313 and Arg-318.

The protein belongs to the RuvB family. In terms of assembly, homohexamer. Forms an RuvA(8)-RuvB(12)-Holliday junction (HJ) complex. HJ DNA is sandwiched between 2 RuvA tetramers; dsDNA enters through RuvA and exits via RuvB. An RuvB hexamer assembles on each DNA strand where it exits the tetramer. Each RuvB hexamer is contacted by two RuvA subunits (via domain III) on 2 adjacent RuvB subunits; this complex drives branch migration. In the full resolvosome a probable DNA-RuvA(4)-RuvB(12)-RuvC(2) complex forms which resolves the HJ.

The protein resides in the cytoplasm. The enzyme catalyses ATP + H2O = ADP + phosphate + H(+). Functionally, the RuvA-RuvB-RuvC complex processes Holliday junction (HJ) DNA during genetic recombination and DNA repair, while the RuvA-RuvB complex plays an important role in the rescue of blocked DNA replication forks via replication fork reversal (RFR). RuvA specifically binds to HJ cruciform DNA, conferring on it an open structure. The RuvB hexamer acts as an ATP-dependent pump, pulling dsDNA into and through the RuvAB complex. RuvB forms 2 homohexamers on either side of HJ DNA bound by 1 or 2 RuvA tetramers; 4 subunits per hexamer contact DNA at a time. Coordinated motions by a converter formed by DNA-disengaged RuvB subunits stimulates ATP hydrolysis and nucleotide exchange. Immobilization of the converter enables RuvB to convert the ATP-contained energy into a lever motion, pulling 2 nucleotides of DNA out of the RuvA tetramer per ATP hydrolyzed, thus driving DNA branch migration. The RuvB motors rotate together with the DNA substrate, which together with the progressing nucleotide cycle form the mechanistic basis for DNA recombination by continuous HJ branch migration. Branch migration allows RuvC to scan DNA until it finds its consensus sequence, where it cleaves and resolves cruciform DNA. This Enterococcus faecalis (strain ATCC 700802 / V583) protein is Holliday junction branch migration complex subunit RuvB.